Here is a 596-residue protein sequence, read N- to C-terminus: Selenocysteine-specific elongation factor (596 aa).

Residues 5 to 217 (RVNVNVGVLG…LLTSQISIPT (213 aa)) enclose the tr-type G domain. Positions 14–21 (GHIDSGKT) are G1. 3 residues coordinate GDP: glycine 19, threonine 21, and alanine 22. Positions 19, 21, and 22 each coordinate GTP. Threonine 21 provides a ligand contact to Mg(2+). Residues 46–50 (GITLD) are G2. Threonine 48 and aspartate 92 together coordinate Mg(2+). A G3 region spans residues 92-95 (DCPG). Positions 146 to 149 (NKID) are G4. The GDP site is built by aspartate 149 and lysine 187. GTP-binding residues include aspartate 149 and lysine 187. The G5 stretch occupies residues 185–187 (AAK). Residue serine 537 is modified to Phosphoserine. Threonine 545 is subject to Phosphothreonine. Residues 547 to 553 (ALKKRAR) carry the Nuclear localization signal motif. Residues 548–573 (LKKRARAGRGEATRQEESAERSEPSQ) form a disordered region. Residues 555–571 (GRGEATRQEESAERSEP) are compositionally biased toward basic and acidic residues. Residue arginine 556 is modified to Omega-N-methylarginine.

Belongs to the TRAFAC class translation factor GTPase superfamily. Classic translation factor GTPase family. SelB subfamily. Mg(2+) serves as cofactor. Requires Mn(2+) as cofactor.

The protein localises to the cytoplasm. It is found in the nucleus. It carries out the reaction GTP + H2O = GDP + phosphate + H(+). Translation factor required for the incorporation of the rare amino acid selenocysteine encoded by UGA codons. Replaces the eRF1-eRF3-GTP ternary complex for the insertion of selenocysteine directed by the UGA codon. Insertion of selenocysteine at UGA codons is mediated by SECISBP2 and EEFSEC: SECISBP2 (1) specifically binds the SECIS sequence once the 80S ribosome encounters an in-frame UGA codon and (2) contacts the RPS27A/eS31 of the 40S ribosome before ribosome stalling. (3) GTP-bound EEFSEC then delivers selenocysteinyl-tRNA(Sec) to the 80S ribosome and adopts a preaccommodated state conformation. (4) After GTP hydrolysis, EEFSEC dissociates from the assembly, selenocysteinyl-tRNA(Sec) accommodates, and peptide bond synthesis and selenoprotein elongation occur. This is Selenocysteine-specific elongation factor from Homo sapiens (Human).